Here is a 308-residue protein sequence, read N- to C-terminus: Oligopeptide transport system permease protein AmiD (308 aa).

The next 6 membrane-spanning stretches (helical) occupy residues 43-63, 111-131, 145-167, 171-193, 234-254, and 274-294; these read TVVM…YPMF, ILIS…VGGI, VYNV…SIGA, NLIF…VQIL, MLPS…GLPI, and AYLF…LFVV. Residues 107-295 form the ABC transmembrane type-1 domain; that stretch reads ARNSILISVI…LVSLSLFVVG (189 aa).

It belongs to the binding-protein-dependent transport system permease family. OppBC subfamily.

It is found in the cell membrane. Its function is as follows. Part of the binding-protein-dependent transport system for oligopeptides; probably responsible for the translocation of the substrate across the membrane. In Streptococcus pneumoniae (strain ATCC BAA-255 / R6), this protein is Oligopeptide transport system permease protein AmiD (amiD).